We begin with the raw amino-acid sequence, 376 residues long: Methionine import ATP-binding protein MetN 2 (376 aa).

Residues 34–273 (VRFINLGKTY…PQHDVSKTLL (240 aa)) enclose the ABC transporter domain. Position 70–77 (70–77 (GRSGAGKS)) interacts with ATP.

It belongs to the ABC transporter superfamily. Methionine importer (TC 3.A.1.24) family. The complex is composed of two ATP-binding proteins (MetN), two transmembrane proteins (MetI) and a solute-binding protein (MetQ).

Its subcellular location is the cell inner membrane. It catalyses the reaction L-methionine(out) + ATP + H2O = L-methionine(in) + ADP + phosphate + H(+). It carries out the reaction D-methionine(out) + ATP + H2O = D-methionine(in) + ADP + phosphate + H(+). In terms of biological role, part of the ABC transporter complex MetNIQ involved in methionine import. Responsible for energy coupling to the transport system. This is Methionine import ATP-binding protein MetN 2 from Pseudomonas savastanoi pv. phaseolicola (strain 1448A / Race 6) (Pseudomonas syringae pv. phaseolicola (strain 1448A / Race 6)).